The sequence spans 220 residues: Phosphopantothenoylcysteine decarboxylase (220 aa).

FMN contacts are provided by residues 29–31 (GSV) and 54–56 (TKA). The Proton donor role is filled by histidine 91. FMN-binding positions include 107–110 (SANT) and alanine 141. Asparagine 143, arginine 173, and alanine 175 together coordinate N-[(R)-4-phosphopantothenoyl]-L-cysteine. Cysteine 176 (proton donor) is an active-site residue. Methionine 184 contacts N-[(R)-4-phosphopantothenoyl]-L-cysteine.

It belongs to the HFCD (homooligomeric flavin containing Cys decarboxylase) superfamily. In terms of assembly, forms homotrimers. Interacts with HIP1. Interacts with HD1 in the dark. It depends on FMN as a cofactor. Expressed in root meristem, shoot apical meristem (SAM), intercalary meristem, floral meristem, embryo and tip of the coleoptile before true leaf emergence.

The protein localises to the nucleus. The enzyme catalyses N-[(R)-4-phosphopantothenoyl]-L-cysteine + H(+) = (R)-4'-phosphopantetheine + CO2. Its pathway is cofactor biosynthesis; coenzyme A biosynthesis; CoA from (R)-pantothenate: step 3/5. Functionally, catalyzes the decarboxylation of 4'-phosphopantothenoylcysteine to 4'-phosphopantetheine, a key step in coenzyme A biosynthesis. Involved in salt and osmotic tolerance, and light-regulated plant growth. Trimerization of HAL3 recruits and activates the E3 ubiquitin-protein ligase HIP1, which leads to the degradation of cell cycle suppressors, resulting in enhancement of cell division and plant growth. HAL3 function in cell division seems to be independent from its PPC decarboxylase activity. Acts as a positive regulator of flowering by binding to HD1 in the dark. This Oryza sativa subsp. japonica (Rice) protein is Phosphopantothenoylcysteine decarboxylase.